A 267-amino-acid polypeptide reads, in one-letter code: Protein LicA (267 aa).

This sequence belongs to the peptidase S49 family.

Mediates phase variation of the LPS epitopes. Phase variation of H.influenza LPS epitopes expressed by LicA is determined by a translational switch. The chain is Protein LicA (licA) from Haemophilus influenzae (strain ATCC 51907 / DSM 11121 / KW20 / Rd).